The sequence spans 328 residues: Peroxidase 71 (328 aa).

Positions 1 to 23 (MGLVRSLCLLITFLNCLIISVHG) are cleaved as a signal peptide. 4 disulfides stabilise this stretch: C44/C120, C77/C82, C126/C324, and C204/C235. H75 acts as the Proton acceptor in catalysis. Ca(2+)-binding residues include D76, V79, G81, D83, and S85. Substrate is bound at residue P167. H197 provides a ligand contact to heme b. A Ca(2+)-binding site is contributed by T198. N-linked (GlcNAc...) asparagine glycosylation is present at N213. The Ca(2+) site is built by D248, S251, and D256. N262 carries N-linked (GlcNAc...) asparagine glycosylation.

Belongs to the peroxidase family. Classical plant (class III) peroxidase subfamily. Heme b serves as cofactor. It depends on Ca(2+) as a cofactor. In terms of tissue distribution, slightly expressed in roots.

It localises to the secreted. The enzyme catalyses 2 a phenolic donor + H2O2 = 2 a phenolic radical donor + 2 H2O. Removal of H(2)O(2), oxidation of toxic reductants, biosynthesis and degradation of lignin, suberization, auxin catabolism, response to environmental stresses such as wounding, pathogen attack and oxidative stress. These functions might be dependent on each isozyme/isoform in each plant tissue. The sequence is that of Peroxidase 71 (PER71) from Arabidopsis thaliana (Mouse-ear cress).